The primary structure comprises 351 residues: Ion-translocating oxidoreductase complex subunit D (351 aa).

Helical transmembrane passes span 20 to 40, 44 to 64, 89 to 109, and 123 to 143; these read IMLLVILACLPGMLAQVYFFG, LIQVGLASATALIAEGVTLSL, LPPLAPWWMVVMATVFAIIIA, and PAMIGYVVLLISFPVQMTSWL. Thr187 is modified (FMN phosphoryl threonine). A run of 5 helical transmembrane segments spans residues 215 to 235, 244 to 264, 267 to 287, 301 to 321, and 322 to 342; these read LSGIGWQWVNIGFLIGGLFLL, IPVSFLLSLMFCASLSWVIAP, FAPPMLHLLSGATMLGAFFIA, LIFGALIGLLVWLIRTYGGYP, and DGVAFAVLLANITVPLIDYYT.

Belongs to the NqrB/RnfD family. In terms of assembly, the complex is composed of six subunits: RnfA, RnfB, RnfC, RnfD, RnfE and RnfG. FMN is required as a cofactor.

The protein localises to the cell inner membrane. Functionally, part of a membrane-bound complex that couples electron transfer with translocation of ions across the membrane. The chain is Ion-translocating oxidoreductase complex subunit D from Pectobacterium carotovorum subsp. carotovorum (strain PC1).